Consider the following 902-residue polypeptide: Protein translocase subunit SecA (902 aa).

ATP-binding positions include Gln-87, 105–109 (GEGKT), and Asp-512. Residues 851–902 (LARQQQLSHQAPVEELTQGSAAAAQEGRKVGRNDPCPCGSGKKFKHCHGKLQ) form a disordered region. Residues Cys-886, Cys-888, Cys-897, and His-898 each contribute to the Zn(2+) site. A compositionally biased stretch (basic residues) spans 892–902 (KKFKHCHGKLQ).

The protein belongs to the SecA family. As to quaternary structure, monomer and homodimer. Part of the essential Sec protein translocation apparatus which comprises SecA, SecYEG and auxiliary proteins SecDF-YajC and YidC. Zn(2+) serves as cofactor.

It localises to the cell inner membrane. It is found in the cytoplasm. The enzyme catalyses ATP + H2O + cellular proteinSide 1 = ADP + phosphate + cellular proteinSide 2.. Functionally, part of the Sec protein translocase complex. Interacts with the SecYEG preprotein conducting channel. Has a central role in coupling the hydrolysis of ATP to the transfer of proteins into and across the cell membrane, serving both as a receptor for the preprotein-SecB complex and as an ATP-driven molecular motor driving the stepwise translocation of polypeptide chains across the membrane. This Sodalis glossinidius (strain morsitans) protein is Protein translocase subunit SecA.